The sequence spans 749 residues: 1,4-alpha-glucan branching enzyme GlgB (749 aa).

D415 functions as the Nucleophile in the catalytic mechanism. Catalysis depends on E468, which acts as the Proton donor.

It belongs to the glycosyl hydrolase 13 family. GlgB subfamily. In terms of assembly, monomer.

The catalysed reaction is Transfers a segment of a (1-&gt;4)-alpha-D-glucan chain to a primary hydroxy group in a similar glucan chain.. The protein operates within glycan biosynthesis; glycogen biosynthesis. Catalyzes the formation of the alpha-1,6-glucosidic linkages in glycogen by scission of a 1,4-alpha-linked oligosaccharide from growing alpha-1,4-glucan chains and the subsequent attachment of the oligosaccharide to the alpha-1,6 position. This Nitrosococcus oceani (strain ATCC 19707 / BCRC 17464 / JCM 30415 / NCIMB 11848 / C-107) protein is 1,4-alpha-glucan branching enzyme GlgB.